A 612-amino-acid chain; its full sequence is Isocitrate dehydrogenase kinase/phosphatase (612 aa).

ATP-binding positions include 327–333 and K348; that span reads APGIKGL. Residue D383 is part of the active site. A disordered region spans residues 593–612; the sequence is AGRASPEPDAPADARSVRVA.

It belongs to the AceK family.

The protein localises to the cytoplasm. It catalyses the reaction L-seryl-[isocitrate dehydrogenase] + ATP = O-phospho-L-seryl-[isocitrate dehydrogenase] + ADP + H(+). Bifunctional enzyme which can phosphorylate or dephosphorylate isocitrate dehydrogenase (IDH) on a specific serine residue. This is a regulatory mechanism which enables bacteria to bypass the Krebs cycle via the glyoxylate shunt in response to the source of carbon. When bacteria are grown on glucose, IDH is fully active and unphosphorylated, but when grown on acetate or ethanol, the activity of IDH declines drastically concomitant with its phosphorylation. This is Isocitrate dehydrogenase kinase/phosphatase from Paraburkholderia phytofirmans (strain DSM 17436 / LMG 22146 / PsJN) (Burkholderia phytofirmans).